The sequence spans 200 residues: Phosphatidylethanolamine N-methyltransferase B (200 aa).

At 1 to 8 (MEKGLSSD) the chain is on the lumenal side. An intramembrane region (helical) is located at residues 9–29 (LIIAFVAIVLHVVNYNVTAQF). The Lumenal portion of the chain corresponds to 30 to 39 (EYKTRYFTKL). The helical transmembrane segment at 40–58 (IGRNAIYYYAVFLIISALI) threads the bilayer. The Cytoplasmic portion of the chain corresponds to 59-86 (RDHFINVAVLSDKDSIILFPTEIANMIG). Residues 87 to 107 (DSCFIFGILLNIWTLKALGIK) traverse the membrane as a helical segment. An S-adenosyl-L-methionine-binding site is contributed by 91–93 (IFG). The Lumenal portion of the chain corresponds to 108–150 (GMYNGDSFGHIMDSPVTGGPYQFFSDPQYVGTTIAALGVAIRN). A helical membrane pass occupies residues 151–171 (QSIYGFLCTILVGVVFYISAT). The Cytoplasmic segment spans residues 172-200 (FVETPHLKNIYSNRSYSKINFKNLKSLKN). An S-adenosyl-L-methionine-binding site is contributed by 174–175 (ET).

It belongs to the class VI-like SAM-binding methyltransferase superfamily. PEMT/PEM2 methyltransferase family.

The protein localises to the endoplasmic reticulum membrane. The protein resides in the mitochondrion membrane. The enzyme catalyses a 1,2-diacyl-sn-glycero-3-phospho-N-methylethanolamine + S-adenosyl-L-methionine = a 1,2-diacyl-sn-glycero-3-phospho-N,N-dimethylethanolamine + S-adenosyl-L-homocysteine + H(+). It carries out the reaction a 1,2-diacyl-sn-glycero-3-phospho-N,N-dimethylethanolamine + S-adenosyl-L-methionine = a 1,2-diacyl-sn-glycero-3-phosphocholine + S-adenosyl-L-homocysteine + H(+). It catalyses the reaction a 1,2-diacyl-sn-glycero-3-phosphoethanolamine + S-adenosyl-L-methionine = a 1,2-diacyl-sn-glycero-3-phospho-N-methylethanolamine + S-adenosyl-L-homocysteine + H(+). It participates in phospholipid metabolism; phosphatidylcholine biosynthesis. Its function is as follows. Catalyzes the three sequential steps of the methylation pathway of phosphatidylcholine biosynthesis, the SAM-dependent methylation of phosphatidylethanolamine (PE) to phosphatidylmonomethylethanolamine (PMME), PMME to phosphatidyldimethylethanolamine (PDME), and PDME to phosphatidylcholine (PC). In Dictyostelium discoideum (Social amoeba), this protein is Phosphatidylethanolamine N-methyltransferase B (pemtB).